Consider the following 195-residue polypeptide: Sec-independent protein translocase protein TatB (195 aa).

Residues 1 to 21 (MFDIGFSELVLIFIVGLVVLG) traverse the membrane as a helical segment. Positions 166 to 195 (DESQFAAYYPPDDDLASPTPSQPQDKQNVS) are disordered. A compositionally biased stretch (polar residues) spans 183–195 (PTPSQPQDKQNVS).

Belongs to the TatB family. The Tat system comprises two distinct complexes: a TatABC complex, containing multiple copies of TatA, TatB and TatC subunits, and a separate TatA complex, containing only TatA subunits. Substrates initially bind to the TatABC complex, which probably triggers association of the separate TatA complex to form the active translocon.

The protein localises to the cell inner membrane. Functionally, part of the twin-arginine translocation (Tat) system that transports large folded proteins containing a characteristic twin-arginine motif in their signal peptide across membranes. Together with TatC, TatB is part of a receptor directly interacting with Tat signal peptides. TatB may form an oligomeric binding site that transiently accommodates folded Tat precursor proteins before their translocation. The protein is Sec-independent protein translocase protein TatB of Actinobacillus pleuropneumoniae serotype 5b (strain L20).